The sequence spans 865 residues: MPNIIRKLVENDKKELKKLNKMALQVESFADEMEHLTDEQLKAKTPELKERIAKGESLDDLLYEAFAVCREAARRVLGLYPFHVQIMGGIVLHNGDVPEMRTGEGKTLTATMPVYLNALSGKGVHVVTVNEYLATRDMTEMGELYSWLGLTVGLNLNSKSPEEKREAYNCDITYSTSAELGFDYLRDNMVTRAEDMVQKPLNYALVDEVDSILVDEARTPLIISGQAESSSALYYRADQFTKTLKGQNLNVATSDYEEGDDYKIDLQSKTISLTEEGIDKAEKFFQIENLYDMENVALTHFVDNALRANFIMLHDIDYMVDENQEVLIIDQFTGRTMPGRRYSDGLHQAIEAKEAVPIQDESKTMASITIQNYFRMYKKLSGMTGTAKTEEEEFREIYNIQITPIPTNRPVQRLDHPDLLYPTLEAKFKAVIDDIKRRHAEGQPILIGTVAVETSELISKKLVEAKIPHEVLNAKNHFREAQIIMNAGQQGAVTIATNMAGRGTDIKLGPGVIDHADPEFRGLAVIGTERHESRRIDNQLRGRSGRQGDPGVSQFYLSLEDELMKRFGSERVSAFLDRMRISGEDAVIKSGLITRQIESSQKRVEGNNYDSRKQVLQYDDVIREQREVIYAQRQEVILTKEDMTPVLMGMFKRTIDRQVDGHELAGNLKDEETVKDLLQTVQNTMLPEEAIELSELTGLSGQAMKDLIFDKVKSRYASQMEKLADPERQLEFQRAVILRVVDNNWSEHIDALDQMRQSVGLRGYAQNNPIVEYQEESYKMYNNMIGAIEFEVTRLMMKAQIQPQTAIRQEAPRMTTTASQENITNVGPDTSVSEEISFENVGRNDPCPCGSGKKFKNCHGRTHIA.

ATP is bound by residues Gln-85, 103 to 107 (GEGKT), and Asp-505. Positions 847, 849, 858, and 859 each coordinate Zn(2+).

Belongs to the SecA family. In terms of assembly, monomer and homodimer. Part of the essential Sec protein translocation apparatus which comprises SecA, SecYEG and auxiliary proteins SecDF. Other proteins may also be involved. Zn(2+) is required as a cofactor.

Its subcellular location is the cell membrane. It localises to the cytoplasm. It catalyses the reaction ATP + H2O + cellular proteinSide 1 = ADP + phosphate + cellular proteinSide 2.. Part of the Sec protein translocase complex. Interacts with the SecYEG preprotein conducting channel. Has a central role in coupling the hydrolysis of ATP to the transfer of proteins into and across the cell membrane, serving as an ATP-driven molecular motor driving the stepwise translocation of polypeptide chains across the membrane. This is Protein translocase subunit SecA from Lactococcus lactis subsp. cremoris (strain MG1363).